We begin with the raw amino-acid sequence, 664 residues long: Degenerin del-1 (664 aa).

Over 1–67 (MARKYIDILK…IFTTSLYWVR (67 aa)) the chain is Cytoplasmic. Residues 68–88 (FLWVVVSLVCICLCMYSFSHV) form a helical membrane-spanning segment. The Extracellular portion of the chain corresponds to 89-607 (KDKYDRKEKI…WFNLMADMGG (519 aa)). Asn-241, Asn-300, Asn-394, Asn-508, and Asn-562 each carry an N-linked (GlcNAc...) asparagine glycan. The chain crosses the membrane as a helical span at residues 608 to 628 (QAGLFLGASIMSVIEFLFFAV). The Cytoplasmic segment spans residues 629–664 (RTLGIACKPRRWRQKTELLRAEELNDAEKGVSTNNN).

This sequence belongs to the amiloride-sensitive sodium channel (TC 1.A.6) family.

The protein localises to the membrane. Its function is as follows. Probable sodium channel subunit. The protein is Degenerin del-1 (del-1) of Caenorhabditis elegans.